A 413-amino-acid chain; its full sequence is Phosphopentomutase (413 aa).

The Mn(2+) site is built by aspartate 11, aspartate 306, histidine 311, aspartate 347, histidine 348, and histidine 359.

This sequence belongs to the phosphopentomutase family. Mn(2+) is required as a cofactor.

The protein resides in the cytoplasm. It catalyses the reaction 2-deoxy-alpha-D-ribose 1-phosphate = 2-deoxy-D-ribose 5-phosphate. It carries out the reaction alpha-D-ribose 1-phosphate = D-ribose 5-phosphate. Its pathway is carbohydrate degradation; 2-deoxy-D-ribose 1-phosphate degradation; D-glyceraldehyde 3-phosphate and acetaldehyde from 2-deoxy-alpha-D-ribose 1-phosphate: step 1/2. Its function is as follows. Isomerase that catalyzes the conversion of deoxy-ribose 1-phosphate (dRib-1-P) and ribose 1-phosphate (Rib-1-P) to deoxy-ribose 5-phosphate (dRib-5-P) and ribose 5-phosphate (Rib-5-P), respectively. This chain is Phosphopentomutase, found in Helicobacter pylori (strain HPAG1).